We begin with the raw amino-acid sequence, 471 residues long: MKEYQTITEVSGPLVYVETDEPIGYDEIVEIETPNGDVKRGQVLESSDGFVAIQVFEGTEGVGKDASVRFLGETLKMPVTEDLLGRVLDGSGNPIDGGPDIVPDDRVDIVGEAINPHAREYPEEFIQTGVSGIDGMNTLVRGQKLPIFSGSGLPHSDLALQIARQASVPEEEAETDDDEGSEFAVVFGAMGITAEEANEFMDDFERTGALERSVVFMNLADDPAVERTVTPRMALTTAEYLAFEKDYHVLVILTDMTNYCEALRQIGAAREEVPGRRGYPGYMYTDLAQLYERAGRIEGKEGSVTQIPILTMPGDDDTHPIPDLTGYITEGQIMMNRDLNSQGVTPPVNVLPSLSRLMDDGIGEGLTRADHGDVSDQLYAAYAEGEELRDLVNIVGREALSERDNRYLDFADRFEAEFIDQGFKTNRDIEETLDLGWELLSMFPKTELNRVDEDLIEDHYVEDVADEATAD.

Belongs to the ATPase alpha/beta chains family. Has multiple subunits with at least A(3), B(3), C, D, E, F, H, I and proteolipid K(x).

Its subcellular location is the cell membrane. Functionally, component of the A-type ATP synthase that produces ATP from ADP in the presence of a proton gradient across the membrane. The B chain is a regulatory subunit. This is A-type ATP synthase subunit B from Halobacterium salinarum (strain ATCC 29341 / DSM 671 / R1).